The following is a 489-amino-acid chain: Amino acid transporter AVT6E (489 aa).

11 helical membrane passes run glycine 76–leucine 96, valine 102–serine 122, isoleucine 156–valine 176, valine 201–aspartate 221, serine 227–isoleucine 247, isoleucine 269–valine 289, isoleucine 310–phenylalanine 330, isoleucine 357–leucine 377, valine 404–phenylalanine 424, lysine 425–leucine 445, and valine 461–isoleucine 481.

The protein belongs to the amino acid/polyamine transporter 2 family. Amino acid/auxin permease (AAAP) (TC 2.A.18.6) subfamily.

Its subcellular location is the endoplasmic reticulum membrane. It localises to the vacuole membrane. The sequence is that of Amino acid transporter AVT6E from Arabidopsis thaliana (Mouse-ear cress).